Consider the following 297-residue polypeptide: Non-homologous end-joining factor 1 (297 aa).

Positions 1–131 are globular head; the sequence is MDARLLQLPW…ATVSTVCRHL (131 aa). Residues 220–286 are C-terminal tail; it reads PKAPTHPKEE…LTHRPPAGAS (67 aa). The tract at residues 222-297 is disordered; it reads APTHPKEEDT…PKKKAKGLFM (76 aa). Over residues 232–255 the composition is skewed to polar residues; it reads GNSASHRPMAESSSISFEKTVPTQ. The span at 263-286 shows a compositional bias: low complexity; the sequence is VSEPSQVPQSSVSCLTHRPPAGAS. The XLM motif lies at 287 to 297; sequence KPKKKAKGLFM. The segment covering 287-297 has biased composition (basic residues); that stretch reads KPKKKAKGLFM.

It belongs to the XRCC4-XLF family. XLF subfamily. As to quaternary structure, homodimer. Interacts with xrcc4; the interaction is direct and is mediated via a head-to-head interaction between N-terminal head regions. Component of the core long-range non-homologous end joining (NHEJ) complex (also named DNA-PK complex) composed of prkdc/DNA-PKcs, lig4, xrcc4, xrcc6/Ku70, xrcc5/Ku80 and nhej1/xlf.

It localises to the nucleus. Its function is as follows. DNA repair protein involved in DNA non-homologous end joining (NHEJ); required for double-strand break (DSB) repair and V(D)J recombination. It is also involved in telomere maintenance. Plays a key role in NHEJ by promoting the ligation of various mismatched and non-cohesive ends. In some studies, has been shown to associate with xrcc4 to form alternating helical filaments that bridge DNA and act like a bandage, holding together the broken DNA until it is repaired. Alternatively, it has also been shown that rather than forming filaments, a single nhej1 dimer interacts through both head domains with xrcc4 to promote the close alignment of DNA ends. The xrcc4-nhej1/xlf subcomplex binds to the DNA fragments of a DSB in a highly diffusive manner and robustly bridges two independent DNA molecules, holding the broken DNA fragments in close proximity to one other. The mobility of the bridges ensures that the ends remain accessible for further processing by other repair factors. In Xenopus laevis (African clawed frog), this protein is Non-homologous end-joining factor 1.